We begin with the raw amino-acid sequence, 191 residues long: Protein GrpE (191 aa).

The protein belongs to the GrpE family. As to quaternary structure, homodimer.

The protein localises to the cytoplasm. Participates actively in the response to hyperosmotic and heat shock by preventing the aggregation of stress-denatured proteins, in association with DnaK and GrpE. It is the nucleotide exchange factor for DnaK and may function as a thermosensor. Unfolded proteins bind initially to DnaJ; upon interaction with the DnaJ-bound protein, DnaK hydrolyzes its bound ATP, resulting in the formation of a stable complex. GrpE releases ADP from DnaK; ATP binding to DnaK triggers the release of the substrate protein, thus completing the reaction cycle. Several rounds of ATP-dependent interactions between DnaJ, DnaK and GrpE are required for fully efficient folding. This is Protein GrpE from Listeria welshimeri serovar 6b (strain ATCC 35897 / DSM 20650 / CCUG 15529 / CIP 8149 / NCTC 11857 / SLCC 5334 / V8).